The following is a 714-amino-acid chain: MEMASAFTLNVRLDNIAIITIDVPDEKMNTLKAEFASQVRAIIKQLRENKELRGVVFISAKPDNFIAGADINMIGNCKTAQEAEALARQGQQLMAEIHALPIPVIAAIHGACLGGGLELALACHGRVCTDDPKTVLGLPEVQLGLLPGSGGTQRLPRLIGVSTALEMILTGKQLRAKQALKLGLVDDVVPHSILLEAAVELVKQDRPSSRPLPVRERILAGPLGRALLFKMVGKKTEHKTQGNYPATERILEVVETGLAQGTSSGYDAEARAFGELAMTPQSQALRSIFFASTDVKKDPGSDAPPAPLNSVGILGGGLMGGGIAYVTACKAGLPVRIKDINPQGINHALKYSWDQLEGKVRRRHLKASERDKQLALISGTTDYRGFAHRDLIIEAVFENLELKQQMVAEVEQNCAAHTIFASNTSSLPIGDIAAHATRPEQVIGLHFFSPVEKMPLVEIIPHAGTSAQTIATTVKLAKKQGKTPIVVRDKAGFYVNRILAPYINEAIRMLTEGERVEHIDAALVKFGFPVGPIQLLDEVGIDTGTKIIPVLEAAYGERFSAPANVVSSILNDDRKGRKNGRGFYLYGQKGRKSKKQVDPAIYPLIGAQGQGRLSAPQVAERCVMLMLNEAVRCVDEQVIRSVRDGDIGAVFGIGFPPFLGGPFRYIDSLGAGEVVAIMQRLATQYGSRFTPCERLVEMSKRGESFWKTTATDLQ.

The enoyl-CoA hydratase stretch occupies residues 1-190 (MEMASAFTLN…KLGLVDDVVP (190 aa)). The interval 306-714 (APLNSVGILG…FWKTTATDLQ (409 aa)) is 3-hydroxyacyl-CoA dehydrogenase.

The protein in the N-terminal section; belongs to the enoyl-CoA hydratase/isomerase family. This sequence in the central section; belongs to the 3-hydroxyacyl-CoA dehydrogenase family. As to quaternary structure, heterotetramer of two alpha chains (FadJ) and two beta chains (FadI).

The protein localises to the cytoplasm. It catalyses the reaction a (3S)-3-hydroxyacyl-CoA = a (2E)-enoyl-CoA + H2O. The enzyme catalyses a 4-saturated-(3S)-3-hydroxyacyl-CoA = a (3E)-enoyl-CoA + H2O. The catalysed reaction is a (3S)-3-hydroxyacyl-CoA + NAD(+) = a 3-oxoacyl-CoA + NADH + H(+). It carries out the reaction (3S)-3-hydroxybutanoyl-CoA = (3R)-3-hydroxybutanoyl-CoA. It participates in lipid metabolism; fatty acid beta-oxidation. Functionally, catalyzes the formation of a hydroxyacyl-CoA by addition of water on enoyl-CoA. Also exhibits 3-hydroxyacyl-CoA epimerase and 3-hydroxyacyl-CoA dehydrogenase activities. The protein is Fatty acid oxidation complex subunit alpha of Escherichia coli (strain ATCC 8739 / DSM 1576 / NBRC 3972 / NCIMB 8545 / WDCM 00012 / Crooks).